Here is a 280-residue protein sequence, read N- to C-terminus: Energy-coupling factor transporter ATP-binding protein EcfA (280 aa).

The 236-residue stretch at 5–240 (IDVKNLTYKY…DEMLKLTGLE (236 aa)) folds into the ABC transporter domain. 40-47 (GHNGSGKS) serves as a coordination point for ATP.

The protein belongs to the ABC transporter superfamily. Energy-coupling factor EcfA family. As to quaternary structure, forms a stable energy-coupling factor (ECF) transporter complex composed of 2 membrane-embedded substrate-binding proteins (S component), 2 ATP-binding proteins (A component) and 2 transmembrane proteins (T component).

Its subcellular location is the cell membrane. In terms of biological role, ATP-binding (A) component of a common energy-coupling factor (ECF) ABC-transporter complex. Unlike classic ABC transporters this ECF transporter provides the energy necessary to transport a number of different substrates. The chain is Energy-coupling factor transporter ATP-binding protein EcfA from Pediococcus pentosaceus (strain ATCC 25745 / CCUG 21536 / LMG 10740 / 183-1w).